Here is a 311-residue protein sequence, read N- to C-terminus: Methionyl-tRNA formyltransferase (311 aa).

110-113 (SLLP) contributes to the (6S)-5,6,7,8-tetrahydrofolate binding site.

It belongs to the Fmt family.

It catalyses the reaction L-methionyl-tRNA(fMet) + (6R)-10-formyltetrahydrofolate = N-formyl-L-methionyl-tRNA(fMet) + (6S)-5,6,7,8-tetrahydrofolate + H(+). Attaches a formyl group to the free amino group of methionyl-tRNA(fMet). The formyl group appears to play a dual role in the initiator identity of N-formylmethionyl-tRNA by promoting its recognition by IF2 and preventing the misappropriation of this tRNA by the elongation apparatus. In Streptococcus pneumoniae (strain P1031), this protein is Methionyl-tRNA formyltransferase.